A 367-amino-acid polypeptide reads, in one-letter code: Homoserine O-acetyltransferase (367 aa).

Residues 44-350 form the AB hydrolase-1 domain; it reads NVIMVEHAWT…AYGHDAFLLE (307 aa). Residue Ser150 is the Nucleophile of the active site. Position 217 (Arg217) interacts with substrate. Catalysis depends on residues Asp311 and His344. Position 345 (Asp345) interacts with substrate.

Belongs to the AB hydrolase superfamily. MetX family. Homodimer.

The protein resides in the cytoplasm. It carries out the reaction L-homoserine + acetyl-CoA = O-acetyl-L-homoserine + CoA. The protein operates within amino-acid biosynthesis; L-methionine biosynthesis via de novo pathway; O-acetyl-L-homoserine from L-homoserine: step 1/1. Functionally, transfers an acetyl group from acetyl-CoA to L-homoserine, forming acetyl-L-homoserine. In vitro, can also use propionyl-CoA or butiryl-CoA as acyl donor. The polypeptide is Homoserine O-acetyltransferase (Trichlorobacter lovleyi (strain ATCC BAA-1151 / DSM 17278 / SZ) (Geobacter lovleyi)).